Here is an 884-residue protein sequence, read N- to C-terminus: Alanine--tRNA ligase (884 aa).

Zn(2+) is bound by residues His565, His569, Cys675, and His679.

The protein belongs to the class-II aminoacyl-tRNA synthetase family. Requires Zn(2+) as cofactor.

Its subcellular location is the cytoplasm. It carries out the reaction tRNA(Ala) + L-alanine + ATP = L-alanyl-tRNA(Ala) + AMP + diphosphate. Catalyzes the attachment of alanine to tRNA(Ala) in a two-step reaction: alanine is first activated by ATP to form Ala-AMP and then transferred to the acceptor end of tRNA(Ala). Also edits incorrectly charged Ser-tRNA(Ala) and Gly-tRNA(Ala) via its editing domain. This is Alanine--tRNA ligase from Maricaulis maris (strain MCS10) (Caulobacter maris).